The following is a 159-amino-acid chain: MLHVLASLPLLLLLVTSASTHAWSRPLWYQVGLDLQPWGCQPKSVEGCRGGLSCPGYWLGPGASRIYPVAAVMITTTMLMICRKILQGRRRSQATKGEHPQVTTEPCGPWKRRAPISDHTLLRGVLHMLDALLVHIEGHLRHLATQRQIQIKGTSTQSG.

The N-terminal stretch at 1-24 is a signal peptide; sequence MLHVLASLPLLLLLVTSASTHAWS. The Extracellular segment spans residues 25-63; it reads RPLWYQVGLDLQPWGCQPKSVEGCRGGLSCPGYWLGPGA. A helical membrane pass occupies residues 64 to 86; sequence SRIYPVAAVMITTTMLMICRKIL. Topologically, residues 87–159 are cytoplasmic; the sequence is QGRRRSQATK…QIKGTSTQSG (73 aa). The tract at residues 91-110 is disordered; the sequence is RSQATKGEHPQVTTEPCGPW.

The protein localises to the membrane. In Homo sapiens (Human), this protein is Transmembrane protein 89 (TMEM89).